The primary structure comprises 188 residues: Elongation factor P (188 aa).

N6-(3,6-diaminohexanoyl)-5-hydroxylysine is present on Lys34.

It belongs to the elongation factor P family. May be beta-lysylated on the epsilon-amino group of Lys-34 by the combined action of EpmA and EpmB, and then hydroxylated on the C5 position of the same residue by EpmC (if this protein is present). Lysylation is critical for the stimulatory effect of EF-P on peptide-bond formation. The lysylation moiety may extend toward the peptidyltransferase center and stabilize the terminal 3-CCA end of the tRNA. Hydroxylation of the C5 position on Lys-34 may allow additional potential stabilizing hydrogen-bond interactions with the P-tRNA.

It is found in the cytoplasm. It functions in the pathway protein biosynthesis; polypeptide chain elongation. Involved in peptide bond synthesis. Alleviates ribosome stalling that occurs when 3 or more consecutive Pro residues or the sequence PPG is present in a protein, possibly by augmenting the peptidyl transferase activity of the ribosome. Modification of Lys-34 is required for alleviation. The protein is Elongation factor P of Vibrio atlanticus (strain LGP32) (Vibrio splendidus (strain Mel32)).